A 301-amino-acid polypeptide reads, in one-letter code: Dihydroorotate dehydrogenase B (NAD(+)), catalytic subunit (301 aa).

FMN contacts are provided by residues S21 and 45–46 (KS). Residues K45, 69–73 (NAVGL), and N125 contribute to the substrate site. N125 is an FMN binding site. The active-site Nucleophile is C128. FMN contacts are provided by K163 and I187. 188-189 (NT) serves as a coordination point for substrate. Residues G213, 239–240 (GG), and 261–262 (GT) contribute to the FMN site.

It belongs to the dihydroorotate dehydrogenase family. Type 1 subfamily. Heterotetramer of 2 PyrK and 2 PyrD type B subunits. The cofactor is FMN.

It localises to the cytoplasm. It carries out the reaction (S)-dihydroorotate + NAD(+) = orotate + NADH + H(+). It participates in pyrimidine metabolism; UMP biosynthesis via de novo pathway; orotate from (S)-dihydroorotate (NAD(+) route): step 1/1. Its function is as follows. Catalyzes the conversion of dihydroorotate to orotate with NAD(+) as electron acceptor. In Thermoplasma volcanium (strain ATCC 51530 / DSM 4299 / JCM 9571 / NBRC 15438 / GSS1), this protein is Dihydroorotate dehydrogenase B (NAD(+)), catalytic subunit (pyrD).